The primary structure comprises 116 residues: Large ribosomal subunit protein bL21c (116 aa).

Belongs to the bacterial ribosomal protein bL21 family. Part of the 50S ribosomal subunit.

The protein localises to the plastid. It is found in the chloroplast. This protein binds to 23S rRNA. The chain is Large ribosomal subunit protein bL21c from Marchantia polymorpha (Common liverwort).